The following is a 548-amino-acid chain: Chaperonin GroEL (548 aa).

ATP contacts are provided by residues 29–32 (TMGP), Lys50, 86–90 (DGTTT), Gly414, 478–480 (NAA), and Asp494.

Belongs to the chaperonin (HSP60) family. Forms a cylinder of 14 subunits composed of two heptameric rings stacked back-to-back. Interacts with the co-chaperonin GroES.

The protein localises to the cytoplasm. It carries out the reaction ATP + H2O + a folded polypeptide = ADP + phosphate + an unfolded polypeptide.. Its function is as follows. Together with its co-chaperonin GroES, plays an essential role in assisting protein folding. The GroEL-GroES system forms a nano-cage that allows encapsulation of the non-native substrate proteins and provides a physical environment optimized to promote and accelerate protein folding. The protein is Chaperonin GroEL of Legionella pneumophila (strain Corby).